We begin with the raw amino-acid sequence, 354 residues long: Sulfate permease CysP (354 aa).

A run of 8 helical transmembrane segments spans residues 3-23, 40-60, 77-97, 125-145, 164-184, 197-217, 293-313, and 320-340; these read LAAI…GAAA, ALIL…GEVV, IVCI…LLGI, LIIV…TYFV, ILGI…GMNN, VLDV…GALL, VWIV…SLFL, and IFIM…TKAI.

Belongs to the inorganic phosphate transporter (PiT) (TC 2.A.20) family.

It localises to the cell membrane. Its function is as follows. Involved in the import of sulfate. The sequence is that of Sulfate permease CysP (cysP) from Bacillus subtilis (strain 168).